The primary structure comprises 204 residues: GTP cyclohydrolase 1 (204 aa).

Cysteine 93, histidine 96, and cysteine 164 together coordinate Zn(2+).

Belongs to the GTP cyclohydrolase I family. As to quaternary structure, toroid-shaped homodecamer, composed of two pentamers of five dimers.

It carries out the reaction GTP + H2O = 7,8-dihydroneopterin 3'-triphosphate + formate + H(+). The protein operates within cofactor biosynthesis; 7,8-dihydroneopterin triphosphate biosynthesis; 7,8-dihydroneopterin triphosphate from GTP: step 1/1. In Rhizobium meliloti (strain 1021) (Ensifer meliloti), this protein is GTP cyclohydrolase 1.